A 436-amino-acid chain; its full sequence is tRNA modification GTPase MnmE (436 aa).

3 residues coordinate (6S)-5-formyl-5,6,7,8-tetrahydrofolate: arginine 20, glutamate 77, and lysine 117. The TrmE-type G domain maps to 214–360; the sequence is GLKIVIAGAP…FIKELESFCL (147 aa). Residues 224-229, 243-249, and 268-271 contribute to the GTP site; these read NSGKSS, MEEAGTT, and DTAG. 2 residues coordinate Mg(2+): serine 228 and threonine 249. Residue lysine 436 participates in (6S)-5-formyl-5,6,7,8-tetrahydrofolate binding.

Belongs to the TRAFAC class TrmE-Era-EngA-EngB-Septin-like GTPase superfamily. TrmE GTPase family. In terms of assembly, homodimer. Heterotetramer of two MnmE and two MnmG subunits. The cofactor is K(+).

The protein resides in the cytoplasm. Its function is as follows. Exhibits a very high intrinsic GTPase hydrolysis rate. Involved in the addition of a carboxymethylaminomethyl (cmnm) group at the wobble position (U34) of certain tRNAs, forming tRNA-cmnm(5)s(2)U34. This is tRNA modification GTPase MnmE from Bartonella quintana (strain Toulouse) (Rochalimaea quintana).